A 458-amino-acid chain; its full sequence is ATP-dependent protease ATPase subunit HslU (458 aa).

Residues Val-18, 60–65 (GVGKTE), Asp-270, Glu-335, and Arg-407 contribute to the ATP site.

Belongs to the ClpX chaperone family. HslU subfamily. In terms of assembly, a double ring-shaped homohexamer of HslV is capped on each side by a ring-shaped HslU homohexamer. The assembly of the HslU/HslV complex is dependent on binding of ATP.

It is found in the cytoplasm. Functionally, ATPase subunit of a proteasome-like degradation complex; this subunit has chaperone activity. The binding of ATP and its subsequent hydrolysis by HslU are essential for unfolding of protein substrates subsequently hydrolyzed by HslV. HslU recognizes the N-terminal part of its protein substrates and unfolds these before they are guided to HslV for hydrolysis. The chain is ATP-dependent protease ATPase subunit HslU from Desulfitobacterium hafniense (strain DSM 10664 / DCB-2).